The sequence spans 759 residues: Phosphoribosylformylglycinamidine synthase subunit PurL (759 aa).

Histidine 46 is a catalytic residue. ATP is bound by residues tyrosine 49 and lysine 88. Glutamate 90 lines the Mg(2+) pocket. Residues 91–94 and arginine 113 each bind substrate; that span reads SHNH. The active-site Proton acceptor is the histidine 92. Aspartate 114 serves as a coordination point for Mg(2+). Glutamine 237 is a substrate binding site. Aspartate 265 contacts Mg(2+). Residue 309–311 participates in substrate binding; sequence ESQ. ATP-binding residues include aspartate 498 and glycine 535. Asparagine 536 is a Mg(2+) binding site. Serine 538 provides a ligand contact to substrate.

This sequence belongs to the FGAMS family. Monomer. Part of the FGAM synthase complex composed of 1 PurL, 1 PurQ and 2 PurS subunits.

The protein resides in the cytoplasm. The catalysed reaction is N(2)-formyl-N(1)-(5-phospho-beta-D-ribosyl)glycinamide + L-glutamine + ATP + H2O = 2-formamido-N(1)-(5-O-phospho-beta-D-ribosyl)acetamidine + L-glutamate + ADP + phosphate + H(+). Its pathway is purine metabolism; IMP biosynthesis via de novo pathway; 5-amino-1-(5-phospho-D-ribosyl)imidazole from N(2)-formyl-N(1)-(5-phospho-D-ribosyl)glycinamide: step 1/2. Functionally, part of the phosphoribosylformylglycinamidine synthase complex involved in the purines biosynthetic pathway. Catalyzes the ATP-dependent conversion of formylglycinamide ribonucleotide (FGAR) and glutamine to yield formylglycinamidine ribonucleotide (FGAM) and glutamate. The FGAM synthase complex is composed of three subunits. PurQ produces an ammonia molecule by converting glutamine to glutamate. PurL transfers the ammonia molecule to FGAR to form FGAM in an ATP-dependent manner. PurS interacts with PurQ and PurL and is thought to assist in the transfer of the ammonia molecule from PurQ to PurL. This chain is Phosphoribosylformylglycinamidine synthase subunit PurL, found in Anaeromyxobacter dehalogenans (strain 2CP-C).